Here is a 318-residue protein sequence, read N- to C-terminus: 4-hydroxy-3-methylbut-2-enyl diphosphate reductase (318 aa).

A [4Fe-4S] cluster-binding site is contributed by C21. 2 residues coordinate (2E)-4-hydroxy-3-methylbut-2-enyl diphosphate: H50 and H83. Dimethylallyl diphosphate is bound by residues H50 and H83. Positions 50 and 83 each coordinate isopentenyl diphosphate. C105 contributes to the [4Fe-4S] cluster binding site. H133 provides a ligand contact to (2E)-4-hydroxy-3-methylbut-2-enyl diphosphate. H133 serves as a coordination point for dimethylallyl diphosphate. H133 provides a ligand contact to isopentenyl diphosphate. E135 (proton donor) is an active-site residue. T176 lines the (2E)-4-hydroxy-3-methylbut-2-enyl diphosphate pocket. C206 provides a ligand contact to [4Fe-4S] cluster. Residues S234, S235, N236, and S278 each coordinate (2E)-4-hydroxy-3-methylbut-2-enyl diphosphate. Dimethylallyl diphosphate contacts are provided by S234, S235, N236, and S278. S234, S235, N236, and S278 together coordinate isopentenyl diphosphate.

This sequence belongs to the IspH family. It depends on [4Fe-4S] cluster as a cofactor.

The catalysed reaction is isopentenyl diphosphate + 2 oxidized [2Fe-2S]-[ferredoxin] + H2O = (2E)-4-hydroxy-3-methylbut-2-enyl diphosphate + 2 reduced [2Fe-2S]-[ferredoxin] + 2 H(+). It carries out the reaction dimethylallyl diphosphate + 2 oxidized [2Fe-2S]-[ferredoxin] + H2O = (2E)-4-hydroxy-3-methylbut-2-enyl diphosphate + 2 reduced [2Fe-2S]-[ferredoxin] + 2 H(+). It participates in isoprenoid biosynthesis; dimethylallyl diphosphate biosynthesis; dimethylallyl diphosphate from (2E)-4-hydroxy-3-methylbutenyl diphosphate: step 1/1. Its pathway is isoprenoid biosynthesis; isopentenyl diphosphate biosynthesis via DXP pathway; isopentenyl diphosphate from 1-deoxy-D-xylulose 5-phosphate: step 6/6. Catalyzes the conversion of 1-hydroxy-2-methyl-2-(E)-butenyl 4-diphosphate (HMBPP) into a mixture of isopentenyl diphosphate (IPP) and dimethylallyl diphosphate (DMAPP). Acts in the terminal step of the DOXP/MEP pathway for isoprenoid precursor biosynthesis. The polypeptide is 4-hydroxy-3-methylbut-2-enyl diphosphate reductase (Shewanella oneidensis (strain ATCC 700550 / JCM 31522 / CIP 106686 / LMG 19005 / NCIMB 14063 / MR-1)).